Reading from the N-terminus, the 275-residue chain is Phosphonoacetaldehyde hydrolase (275 aa).

The active-site Nucleophile is Asp15. 2 residues coordinate Mg(2+): Asp15 and Ala17. The active-site Schiff-base intermediate with substrate is Lys56. A Mg(2+)-binding site is contributed by Asp189.

Belongs to the HAD-like hydrolase superfamily. PhnX family. As to quaternary structure, homodimer. Mg(2+) serves as cofactor.

It catalyses the reaction phosphonoacetaldehyde + H2O = acetaldehyde + phosphate + H(+). Its function is as follows. Involved in phosphonate degradation. The polypeptide is Phosphonoacetaldehyde hydrolase (Pseudomonas fluorescens (strain Pf0-1)).